A 182-amino-acid chain; its full sequence is ADP-ribosylation factor-like protein 3 (182 aa).

A lipid anchor (N-myristoyl glycine) is attached at glycine 2. Serine 5 is subject to Phosphoserine. GTP-binding positions include 24–31, threonine 48, 67–71, glycine 70, 126–129, and 159–161; these read GLDNAGKT, DIGGQ, NKQD, and SAL. Residues threonine 31 and threonine 48 each coordinate Mg(2+).

Belongs to the small GTPase superfamily. Arf family. In terms of assembly, found in a complex with ARL3, RP2 and UNC119 (or UNC119B); RP2 induces hydrolysis of GTP ARL3 in the complex, leading to the release of UNC119 (or UNC119B). Interacts with RP2; interaction is direct and stimulated with the activated GTP-bound form of ARL3. Interacts with SYS1. Interacts with ARL2BP; the GTP-bound form interacts with ARL2BP. Microtubule-associated protein. Does not interact with TBCC. Interacts with RP2. Interacts with PDE6D; the interaction occurs specifically with the GTP-bound form of ARL3. Interacts with GGA1; the interaction recruits PKD1:PKD2 complex to trans-Golgi network and is required for ciliary targeting of PKD1:PKD2 complex. Interacts with DNAAF9.

Its subcellular location is the golgi apparatus membrane. The protein resides in the cytoplasm. It is found in the cytoskeleton. The protein localises to the spindle. It localises to the nucleus. Its subcellular location is the microtubule organizing center. The protein resides in the centrosome. It is found in the cell projection. The protein localises to the cilium. In terms of biological role, small GTP-binding protein which cycles between an inactive GDP-bound and an active GTP-bound form, and the rate of cycling is regulated by guanine nucleotide exchange factors (GEF) and GTPase-activating proteins (GAP). Required for normal cytokinesis and cilia signaling. Requires assistance from GTPase-activating proteins (GAPs) like RP2 and PDE6D, in order to cycle between inactive GDP-bound and active GTP-bound forms. Required for targeting proteins to the cilium, including myristoylated NPHP3 and prenylated INPP5E. Targets NPHP3 to the ciliary membrane by releasing myristoylated NPHP3 from UNC119B cargo adapter into the cilium. Required for PKD1:PKD2 complex targeting from the trans-Golgi network to the cilium. In Rattus norvegicus (Rat), this protein is ADP-ribosylation factor-like protein 3 (Arl3).